The following is a 513-amino-acid chain: Glutamate--tRNA ligase 2 (513 aa).

Residues 11 to 21 carry the 'HIGH' region motif; that stretch reads PSPSGFLHIGS. Residues 240–244 carry the 'KMSKS' region motif; it reads KLSKR. Lysine 243 is an ATP binding site.

It belongs to the class-I aminoacyl-tRNA synthetase family. Glutamate--tRNA ligase type 1 subfamily. In terms of assembly, monomer.

Its subcellular location is the cytoplasm. The enzyme catalyses tRNA(Glu) + L-glutamate + ATP = L-glutamyl-tRNA(Glu) + AMP + diphosphate. Catalyzes the attachment of glutamate to tRNA(Glu) in a two-step reaction: glutamate is first activated by ATP to form Glu-AMP and then transferred to the acceptor end of tRNA(Glu). This chain is Glutamate--tRNA ligase 2, found in Rickettsia massiliae (strain Mtu5).